The primary structure comprises 307 residues: Undecaprenyl-diphosphatase 2 (307 aa).

The next 8 helical transmembrane spans lie at 19 to 41 (GVTEFLPVSSTGHMIILGSIIGF), 56 to 76 (IHMFEIIIQLGAILAIVVLYW), 117 to 137 (FKFWTNIVVACIPAIVIGLPF), 144 to 164 (LLFFPAPVAAALMVGAVWMIF), 208 to 228 (IIGAWIVGVATVAGAEFSFFL), 229 to 249 (AIPMMLGASLLFLIKNSVVLS), 251 to 271 (VQILGLAVGFIVAFIVALVVV), and 285 to 305 (IFAVYRLAIGIIVLVLGFTKV).

This sequence belongs to the UppP family.

Its subcellular location is the cell membrane. The catalysed reaction is di-trans,octa-cis-undecaprenyl diphosphate + H2O = di-trans,octa-cis-undecaprenyl phosphate + phosphate + H(+). Its function is as follows. Catalyzes the dephosphorylation of undecaprenyl diphosphate (UPP). Confers resistance to bacitracin. The polypeptide is Undecaprenyl-diphosphatase 2 (Clostridium acetobutylicum (strain ATCC 824 / DSM 792 / JCM 1419 / IAM 19013 / LMG 5710 / NBRC 13948 / NRRL B-527 / VKM B-1787 / 2291 / W)).